Here is a 221-residue protein sequence, read N- to C-terminus: Protein RER1D (221 aa).

4 consecutive transmembrane segments (helical) span residues 41–58, 64–84, 128–148, and 149–169; these read IVRR…YIYR, GYFV…IGFL, FVVA…FWPI, and LLCY…VHMF. Residues 200 to 221 form a disordered region; the sequence is KGDGGDDRPSSSNSSQGNEKQD. The segment covering 209 to 221 has biased composition (polar residues); the sequence is SSSNSSQGNEKQD.

It belongs to the RER1 family.

The protein localises to the membrane. Its function is as follows. Involved in the retrieval of endoplasmic reticulum membrane proteins from the early Golgi compartment. In Arabidopsis thaliana (Mouse-ear cress), this protein is Protein RER1D.